A 348-amino-acid chain; its full sequence is Cyclic AMP-dependent transcription factor ATF-4 (348 aa).

K53 is covalently cross-linked (Glycyl lysine isopeptide (Lys-Gly) (interchain with G-Cter in SUMO2)). 2 disordered regions span residues 151 to 174 and 187 to 265; these read QGAP…TPDH and PEGD…GEKM. S211, S215, S220, S227, and S231 each carry phosphoserine. Residues 211–220 carry the BetaTrCP degron motif motif; the sequence is SDNDSGICMS. Over residues 221-241 the composition is skewed to polar residues; the sequence is PDSSLGSPQDSPSTSRGSPNK. P232 is modified (4-hydroxyproline). Residues S242 and S245 each carry the phosphoserine modification. A compositionally biased stretch (low complexity) spans 242–253; it reads SLLSPGALSGSS. Residues K256, K264, and K269 each participate in a glycyl lysine isopeptide (Lys-Gly) (interchain with G-Cter in SUMO2) cross-link. The region spanning 275–338 is the bZIP domain; sequence LDKKLKKMEQ…QYLKDQIEEV (64 aa). Positions 277–297 are basic motif; it reads KKLKKMEQNKTAATRYRQKKR. The segment at 302-338 is interaction with GABBR1; that stretch reads ALTGECKELEKKNEALKEKADSLAKEIQYLKDQIEEV. The segment at 303-331 is leucine-zipper; that stretch reads LTGECKELEKKNEALKEKADSLAKEIQYL. K308 carries the N6-acetyllysine modification.

The protein belongs to the bZIP family. In terms of assembly, binds DNA as a homodimer and as a heterodimer. Heterodimer; heterodimerizes with CEBPB. Heterodimer; heterodimerizes with DDIT3/CHOP. Interacts with CEP290 (via an N-terminal region). Interacts with NEK6, DAPK2 (isoform 2) and ZIPK/DAPK3. Interacts (via its leucine zipper domain) with GABBR1 and GABBR2 (via their C-termini). Forms a heterodimer with TXLNG in osteoblasts. Interacts (via its DNA binding domain) with FOXO1 (C-terminal half); the interaction occurs in osteoblasts and regulates glucose homeostasis through suppression of beta-cell proliferation and a decrease in insulin production. Interacts with SATB2; the interaction results in enhanced DNA binding and transactivation by these transcription factors. Interacts with ABRAXAS2. Interacts with TRIB3, inhibiting the transactivation activity of ATF4. Interacts with DISC1; which inhibits ATF4 transcription factor activity by disrupting ATF4 dimerization and DNA-binding. Interacts with EP300/p300; EP300/p300 stabilizes ATF4 and increases its transcriptional activity independently of its catalytic activity by preventing its ubiquitination. In terms of processing, ubiquitinated by SCF(BTRC) in response to mTORC1 signal, followed by proteasomal degradation and leading to down-regulate expression of SIRT4. Interaction with EP300/p300 inhibits ubiquitination by SCF(BTRC). Phosphorylation at Ser-242 by RPS6KA3/RSK2 in osteoblasts enhances transactivation activity and promotes osteoblast differentiation. Phosphorylated on the betaTrCP degron motif at Ser-215, followed by phosphorylation at Ser-220, Ser-227, Ser-231 and Ser-245, promoting interaction with BTRC and ubiquitination. Phosphorylation is promoted by mTORC1. Phosphorylation at Ser-211 by CK2 decreases its stability. Phosphorylated by NEK6. Post-translationally, hydroxylated by PHD3, leading to decreased protein stability.

The protein resides in the nucleus. It localises to the nucleus speckle. The protein localises to the cytoplasm. It is found in the cell membrane. Its subcellular location is the cytoskeleton. The protein resides in the microtubule organizing center. It localises to the centrosome. Transcription factor that binds the cAMP response element (CRE) (consensus: 5'-GTGACGT[AC][AG]-3') and displays two biological functions, as regulator of metabolic and redox processes under normal cellular conditions, and as master transcription factor during integrated stress response (ISR). Binds to asymmetric CRE's as a heterodimer and to palindromic CRE's as a homodimer. Core effector of the ISR, which is required for adaptation to various stress such as endoplasmic reticulum (ER) stress, amino acid starvation, mitochondrial stress or oxidative stress. During ISR, ATF4 translation is induced via an alternative ribosome translation re-initiation mechanism in response to EIF2S1/eIF-2-alpha phosphorylation, and stress-induced ATF4 acts as a master transcription factor of stress-responsive genes in order to promote cell recovery. Promotes the transcription of genes linked to amino acid sufficiency and resistance to oxidative stress to protect cells against metabolic consequences of ER oxidation. Activates the transcription of NLRP1, possibly in concert with other factors in response to ER stress. Activates the transcription of asparagine synthetase (ASNS) in response to amino acid deprivation or ER stress. However, when associated with DDIT3/CHOP, the transcriptional activation of the ASNS gene is inhibited in response to amino acid deprivation. Together with DDIT3/CHOP, mediates programmed cell death by promoting the expression of genes involved in cellular amino acid metabolic processes, mRNA translation and the terminal unfolded protein response (terminal UPR), a cellular response that elicits programmed cell death when ER stress is prolonged and unresolved. Activates the expression of COX7A2L/SCAF1 downstream of the EIF2AK3/PERK-mediated unfolded protein response, thereby promoting formation of respiratory chain supercomplexes and increasing mitochondrial oxidative phosphorylation. Together with DDIT3/CHOP, activates the transcription of the IRS-regulator TRIB3 and promotes ER stress-induced neuronal cell death by regulating the expression of BBC3/PUMA in response to ER stress. May cooperate with the UPR transcriptional regulator QRICH1 to regulate ER protein homeostasis which is critical for cell viability in response to ER stress. In the absence of stress, ATF4 translation is at low levels and it is required for normal metabolic processes such as embryonic lens formation, fetal liver hematopoiesis, bone development and synaptic plasticity. Acts as a regulator of osteoblast differentiation in response to phosphorylation by RPS6KA3/RSK2: phosphorylation in osteoblasts enhances transactivation activity and promotes expression of osteoblast-specific genes and post-transcriptionally regulates the synthesis of Type I collagen, the main constituent of the bone matrix. Cooperates with FOXO1 in osteoblasts to regulate glucose homeostasis through suppression of beta-cell production and decrease in insulin production. Activates transcription of SIRT4. Regulates the circadian expression of the core clock component PER2 and the serotonin transporter SLC6A4. Binds in a circadian time-dependent manner to the cAMP response elements (CRE) in the SLC6A4 and PER2 promoters and periodically activates the transcription of these genes. Mainly acts as a transcriptional activator in cellular stress adaptation, but it can also act as a transcriptional repressor: acts as a regulator of synaptic plasticity by repressing transcription, thereby inhibiting induction and maintenance of long-term memory. Regulates synaptic functions via interaction with DISC1 in neurons, which inhibits ATF4 transcription factor activity by disrupting ATF4 dimerization and DNA-binding. This is Cyclic AMP-dependent transcription factor ATF-4 from Bos taurus (Bovine).